Consider the following 130-residue polypeptide: Small ribosomal subunit protein uS8 (130 aa).

Belongs to the universal ribosomal protein uS8 family. Part of the 30S ribosomal subunit. Contacts proteins S5 and S12.

One of the primary rRNA binding proteins, it binds directly to 16S rRNA central domain where it helps coordinate assembly of the platform of the 30S subunit. In Pseudoalteromonas atlantica (strain T6c / ATCC BAA-1087), this protein is Small ribosomal subunit protein uS8.